The sequence spans 491 residues: Large ribosomal subunit protein mL101 (rPPR4) (491 aa).

PPR repeat units follow at residues 122-156 (TELT…NITP), 157-191 (SSMS…NVMP), 192-226 (DSYT…GRVA), 228-262 (DWTT…NTQR), 263-293 (DFTA…LRLA), 298-328 (SNVA…WQAN), 333-367 (DIRI…GGKL), and 368-402 (NAKT…GKGD).

It belongs to the PPR family. P subfamily. In terms of assembly, component of the mitochondrial ribosome large subunit.

It is found in the mitochondrion. In Arabidopsis thaliana (Mouse-ear cress), this protein is Large ribosomal subunit protein mL101 (rPPR4).